A 177-amino-acid chain; its full sequence is Interleukin-1 receptor antagonist protein (177 aa).

The signal sequence occupies residues 1–25 (MEVSRYLCSYLISFLLFLFHSETAC). The cysteines at positions 91 and 141 are disulfide-linked. Asparagine 109 carries an N-linked (GlcNAc...) asparagine glycan.

The protein belongs to the IL-1 family.

The protein resides in the secreted. Functionally, anti-inflammatory antagonist of interleukin-1 family of proinflammatory cytokines such as interleukin-1beta/IL1B and interleukin-1alpha/IL1A. Protects from immune dysregulation and uncontrolled systemic inflammation triggered by IL1 for a range of innate stimulatory agents such as pathogens. This Sus scrofa (Pig) protein is Interleukin-1 receptor antagonist protein (IL1RN).